The primary structure comprises 161 residues: Serine-protein kinase RsbW (161 aa).

Belongs to the anti-sigma-factor family.

It carries out the reaction L-seryl-[protein] + ATP = O-phospho-L-seryl-[protein] + ADP + H(+). It catalyses the reaction L-threonyl-[protein] + ATP = O-phospho-L-threonyl-[protein] + ADP + H(+). In terms of biological role, negative regulator of sigma-B activity. Phosphorylates and inactivates its specific antagonist protein, RsbV. Upon phosphorylation of RsbV, RsbW is released and binds to sigma-B, thereby blocking its ability to form an RNA polymerase holoenzyme (E-sigma-B). In Bacillus licheniformis (strain ATCC 14580 / DSM 13 / JCM 2505 / CCUG 7422 / NBRC 12200 / NCIMB 9375 / NCTC 10341 / NRRL NRS-1264 / Gibson 46), this protein is Serine-protein kinase RsbW.